We begin with the raw amino-acid sequence, 238 residues long: Ribonuclease PH (238 aa).

Phosphate contacts are provided by residues arginine 86 and 124–126; that span reads GTR.

The protein belongs to the RNase PH family. As to quaternary structure, homohexameric ring arranged as a trimer of dimers.

The enzyme catalyses tRNA(n+1) + phosphate = tRNA(n) + a ribonucleoside 5'-diphosphate. In terms of biological role, phosphorolytic 3'-5' exoribonuclease that plays an important role in tRNA 3'-end maturation. Removes nucleotide residues following the 3'-CCA terminus of tRNAs; can also add nucleotides to the ends of RNA molecules by using nucleoside diphosphates as substrates, but this may not be physiologically important. Probably plays a role in initiation of 16S rRNA degradation (leading to ribosome degradation) during starvation. The sequence is that of Ribonuclease PH from Rhizorhabdus wittichii (strain DSM 6014 / CCUG 31198 / JCM 15750 / NBRC 105917 / EY 4224 / RW1) (Sphingomonas wittichii).